The primary structure comprises 153 residues: Suppressor of RNA silencing (153 aa).

The tract at residues 1–23 (MMATFSCVCCGTSTTSTYCGKRC) is C-1. The segment at 1–85 (MMATFSCVCC…IVSRFCGQKH (85 aa)) is interaction with TGB1. The basic motif (BM) stretch occupies residues 19–47 (CGKRCERKHVYSETRNKRLELYKKYLLEP). The segment at 60-85 (CGMPCSIAEEACDQLPIVSRFCGQKH) is C-2. Residues 86-127 (ADLYDSLLKRSEQELLLEFLQKKMQELKLSHIVKMAKLESEV) form an interaction with replication protein alpha-A region. Residues 92 to 132 (LLKRSEQELLLEFLQKKMQELKLSHIVKMAKLESEVNAIRK) are a coiled coil. Ser-96 is modified (phosphoserine).

This sequence belongs to the virgaviridae suppressor of RNA silencing family. In terms of assembly, homooligomer. Interacts (via C-terminus) with replication protein alpha-A. Interacts (via N-terminus) with the movement protein TGB1; this interaction targets gammab-TGB1 at the periphery of chloroplasts and plasmodesmata. Interacts with host autophagy protein ATG7; this interaction disrupts the host ATG7-ATG8 interaction to promote viral infection. Interacts (via BM region) with host STY46; this interaction inhibits the viral infection. Post-translationally, phosphorylated at Ser-96 by a host PKA-like kinase; the phosphorylation at this site seems to suppress host cell death. Serine-phosphorylated by host STY46 kinase.

It is found in the host chloroplast envelope. The protein localises to the host endoplasmic reticulum. Its subcellular location is the host cell junction. It localises to the host plasmodesma. Functionally, suppressor of RNA-mediated gene silencing, also known as post-transcriptional gene silencing (PTGS), a mechanism of plant viral defense that limits the accumulation of viral RNAs. Promotes viral cell-to-cell long distance movement by enhancing the ATPase activity of TGB1. Enhances RNA helicase activity of replication protein alpha-A. Suppresses autophagy induced by the host as a defense mechanism against viral infection. The protein is Suppressor of RNA silencing of Barley stripe mosaic virus (BSMV).